Reading from the N-terminus, the 96-residue chain is Mitochondrial import inner membrane translocase subunit Tim13-A (96 aa).

Residues 47 to 70 carry the Twin CX3C motif motif; it reads CFRKCIGKPGGSLDNSEQKCIAMC. Disulfide bonds link C47–C70 and C51–C66.

Belongs to the small Tim family. In terms of assembly, heterohexamer; composed of 3 copies of TIMM8 (TIMM8A or TIMM8B) and 3 copies of TIMM13, named soluble 70 kDa complex. Associates with the TIM22 complex, whose core is composed of TIMM22.

It is found in the mitochondrion inner membrane. Functionally, mitochondrial intermembrane chaperone that participates in the import and insertion of some multi-pass transmembrane proteins into the mitochondrial inner membrane. Also required for the transfer of beta-barrel precursors from the TOM complex to the sorting and assembly machinery (SAM complex) of the outer membrane. Acts as a chaperone-like protein that protects the hydrophobic precursors from aggregation and guide them through the mitochondrial intermembrane space. The TIMM8-TIMM13 complex mediates the import of some proteins while the predominant TIMM9-TIMM10 70 kDa complex mediates the import of much more proteins. This Xenopus laevis (African clawed frog) protein is Mitochondrial import inner membrane translocase subunit Tim13-A (timm13-a).